The chain runs to 458 residues: ATP synthase subunit beta (458 aa).

148 to 155 lines the ATP pocket; the sequence is GGAGVGKT.

Belongs to the ATPase alpha/beta chains family. In terms of assembly, F-type ATPases have 2 components, CF(1) - the catalytic core - and CF(0) - the membrane proton channel. CF(1) has five subunits: alpha(3), beta(3), gamma(1), delta(1), epsilon(1). CF(0) has three main subunits: a(1), b(2) and c(9-12). The alpha and beta chains form an alternating ring which encloses part of the gamma chain. CF(1) is attached to CF(0) by a central stalk formed by the gamma and epsilon chains, while a peripheral stalk is formed by the delta and b chains.

Its subcellular location is the cell inner membrane. The enzyme catalyses ATP + H2O + 4 H(+)(in) = ADP + phosphate + 5 H(+)(out). In terms of biological role, produces ATP from ADP in the presence of a proton gradient across the membrane. The catalytic sites are hosted primarily by the beta subunits. This chain is ATP synthase subunit beta, found in Shewanella pealeana (strain ATCC 700345 / ANG-SQ1).